The following is a 418-amino-acid chain: Sterigmatocystin 8-O-methyltransferase (418 aa).

A propeptide spanning residues 1–41 (MTLPNKAALVGLAHTLSEQVKRYLVTADETKSPEDHKLCIE) is cleaved from the precursor. Substrate is bound at residue 170–176 (MRSAAYF). The tract at residues 206-225 (LFDYYSTVDEVRGRRFDLGM) is substrate binding. S-adenosyl-L-methionine is bound by residues 254–255 (GG), Asp-277, 297–298 (DI), and Arg-313. The active-site Proton acceptor is the His-317.

It belongs to the class I-like SAM-binding methyltransferase superfamily. Cation-independent O-methyltransferase family. COMT subfamily.

It catalyses the reaction sterigmatocystin + S-adenosyl-L-methionine = 8-O-methylsterigmatocystin + S-adenosyl-L-homocysteine + H(+). The enzyme catalyses dihydrosterigmatocystin + S-adenosyl-L-methionine = 8-O-methyldihydrosterigmatocystin + S-adenosyl-L-homocysteine + H(+). The protein operates within mycotoxin biosynthesis; aflatoxin biosynthesis. Involved in the conversion of sterigmatocystin to O-methylsterigmatocystin (OMST) and dihydrosterigmatocystin to dihydro-o-methylsterigmatocystin in the aflatoxin biosynthesis pathway. In Aspergillus flavus (strain ATCC 200026 / FGSC A1120 / IAM 13836 / NRRL 3357 / JCM 12722 / SRRC 167), this protein is Sterigmatocystin 8-O-methyltransferase (omtA).